Consider the following 215-residue polypeptide: Putative serine/threonine-protein kinase YrzF (215 aa).

A Protein kinase domain is found at 27–215 (SEELTLIGKG…HFAQRKRKYS (189 aa)). ATP-binding positions include 33-41 (IGKGRSAYV) and Lys54. Asp135 acts as the Proton acceptor in catalysis.

The protein belongs to the protein kinase superfamily. Ser/Thr protein kinase family.

It catalyses the reaction L-seryl-[protein] + ATP = O-phospho-L-seryl-[protein] + ADP + H(+). It carries out the reaction L-threonyl-[protein] + ATP = O-phospho-L-threonyl-[protein] + ADP + H(+). The protein is Putative serine/threonine-protein kinase YrzF (yrzF) of Bacillus subtilis (strain 168).